The sequence spans 736 residues: Zinc finger MYND domain-containing protein 15 (736 aa).

Disordered regions lie at residues 70-94 (SLGQ…DEPP) and 109-192 (LEDG…KNAE). Residues 110 to 123 (EDGEEGEEEEEDEE) show a composition bias toward acidic residues. Basic and acidic residues-rich tracts occupy residues 124–135 (HGERPGMEKVEP) and 165–185 (ASRE…PEKR). Zn(2+)-binding residues include Cys-307, Cys-310, Cys-322, Cys-325, Cys-331, Cys-335, His-349, and Cys-353. An MYND-type zinc finger spans residues 307–353 (CHVCHKHSFEVKLTPCPQCSAVLYCGEACLQADWRRCPDDVSHRFWC). Disordered stretches follow at residues 556–583 (DGPE…GGRR) and 696–736 (GGTV…RRRR). Residues 704-718 (GPAPRPPTPAAPPVP) are compositionally biased toward pro residues. Basic residues predominate over residues 719 to 736 (ARRRRGEKKAARGPRRRR).

In terms of assembly, interacts with HDAC1, HDAC3, HDAC6 and, to a lesser extent, with HDAC7. As to expression, testis-specific. Expressed in pachytene spermatocytes and all developing spermatids, but not in Sertoli, nor Leydig cells (at protein level).

It is found in the nucleus. Its subcellular location is the cytoplasm. Functionally, acts as a transcriptional repressor through interaction with histone deacetylases (HDACs). May regulate haploid genes important for spermiogenesis. The protein is Zinc finger MYND domain-containing protein 15 (Zmynd15) of Mus musculus (Mouse).